A 337-amino-acid chain; its full sequence is Tetraacyldisaccharide 4'-kinase (337 aa).

56-63 contacts ATP; sequence VAGGAGKT.

The protein belongs to the LpxK family.

It carries out the reaction a lipid A disaccharide + ATP = a lipid IVA + ADP + H(+). The protein operates within glycolipid biosynthesis; lipid IV(A) biosynthesis; lipid IV(A) from (3R)-3-hydroxytetradecanoyl-[acyl-carrier-protein] and UDP-N-acetyl-alpha-D-glucosamine: step 6/6. In terms of biological role, transfers the gamma-phosphate of ATP to the 4'-position of a tetraacyldisaccharide 1-phosphate intermediate (termed DS-1-P) to form tetraacyldisaccharide 1,4'-bis-phosphate (lipid IVA). The chain is Tetraacyldisaccharide 4'-kinase from Rhodospirillum centenum (strain ATCC 51521 / SW).